The following is a 235-amino-acid chain: Derlin-3 (235 aa).

Topologically, residues 1–22 are cytoplasmic; the sequence is MAWQGLAAEFLQVPAVTRAYTA. Residues 23 to 43 form a helical membrane-spanning segment; it reads ACVLTTAAVQLELLSPFQLYF. The Lumenal portion of the chain corresponds to 44–58; it reads NPHLVFRKFQVWRLV. Residues 59-79 traverse the membrane as a helical segment; sequence TNFLFFGPLGFSFFFNMLFVF. At 80 to 98 the chain is on the cytoplasmic side; sequence RYCRMLEEGSFRGRTADFV. The chain crosses the membrane as a helical span at residues 99-119; it reads FMFLFGGVLMTLLGLLGSLFF. Over 120–157 the chain is Lumenal; sequence LGQALMAMLVYVWSRRSPRVRVNFFGLLTFQAPFLPWA. Residues 158 to 178 traverse the membrane as a helical segment; sequence LMGFSLLLGNSILVDLLGIAV. At 179–235 the chain is on the cytoplasmic side; that stretch reads GHIYYFLEDVFPNQPGGKRLLQTPGFLKLLLDAPAEDPNYLPLPEEQPGPHLPPPQQ. Residues 216–235 are disordered; the sequence is PNYLPLPEEQPGPHLPPPQQ. The segment covering 223–235 has biased composition (pro residues); that stretch reads EEQPGPHLPPPQQ.

This sequence belongs to the derlin family. In terms of assembly, forms homo- and heterooligomers with DERL2 and, to a lesser extent, with DERL1. Interacts with VCP and EDEM1. Interacts with SELENOK and SELENOS. Interacts with the signal recognition particle/SRP and the SRP receptor; in the process of endoplasmic reticulum stress-induced pre-emptive quality control. As to expression, unlike DERL1 and DERL2, restricted to several tissues. Expressed at high levels in placenta, pancreas, spleen and small intestine.

The protein localises to the endoplasmic reticulum membrane. Its function is as follows. Functional component of endoplasmic reticulum-associated degradation (ERAD) for misfolded lumenal glycoproteins, but not that of misfolded nonglycoproteins. May act by forming a channel that allows the retrotranslocation of misfolded glycoproteins into the cytosol where they are ubiquitinated and degraded by the proteasome. May mediate the interaction between VCP and the misfolded glycoproteins. May be involved in endoplasmic reticulum stress-induced pre-emptive quality control, a mechanism that selectively attenuates the translocation of newly synthesized proteins into the endoplasmic reticulum and reroutes them to the cytosol for proteasomal degradation. The sequence is that of Derlin-3 from Homo sapiens (Human).